Consider the following 395-residue polypeptide: Probable hercynylcysteine sulfoxide lyase (395 aa).

Residues 1–21 (MQDEAMRRSGANSPAGDSLAD) form a disordered region. At Lys-220 the chain carries N6-(pyridoxal phosphate)lysine.

It belongs to the class-V pyridoxal-phosphate-dependent aminotransferase family. EgtE subfamily. Pyridoxal 5'-phosphate serves as cofactor.

The catalysed reaction is S-(hercyn-2-yl)-L-cysteine S-oxide + AH2 + H(+) = ergothioneine + pyruvate + A + NH4(+). Its pathway is amino-acid biosynthesis; ergothioneine biosynthesis. Functionally, probably catalyzes the conversion of hercynylcysteine sulfoxide to ergothioneine. ERG is one of the major redox buffers which protects bacteria against redox stressors and antibiotics; loss of ERG or mycothiol (MSH, the other major redox buffer in this bacteria) leads to respiratory alterations and bioenergetic deficiencies that negatively impact virulence. In Mycobacterium tuberculosis (strain CDC 1551 / Oshkosh), this protein is Probable hercynylcysteine sulfoxide lyase.